A 931-amino-acid polypeptide reads, in one-letter code: NEDD4-binding protein 1 (931 aa).

The 85-residue stretch at 75 to 159 (GKAVRSAKEY…VQQFVKLFEN (85 aa)) folds into the KH-like domain. Disordered stretches follow at residues 289–329 (MTSK…HNDS), 413–474 (QEWS…TQVD), and 547–571 (CTSAKSKTAVHQKSAGPSPVQNSHS). Composition is skewed to basic and acidic residues over residues 290–309 (TSKERQSCKRRFSDAEESLP) and 319–329 (QEVKSVSHNDS). Polar residues predominate over residues 416–434 (SSKTPKTTNLRLGSNANSS). Basic and acidic residues-rich tracts occupy residues 435-444 (HKLEDEDISC) and 456-467 (NETRTERHKARD). Positions 547-557 (CTSAKSKTAVH) are enriched in polar residues. In terms of domain architecture, RNase NYN spans 659-811 (LKHIIIDGSN…LGRNGPRLDD (153 aa)). The interval 841–863 (LFMHVPNPASSSQQPKNRAHGDH) is disordered. A coCUN region spans residues 884–931 (RSASETVWLREALIKIFPDYEQRQKIDKILADHPFMRDLNALSAMVLD).

This sequence belongs to the N4BP1 family.

It localises to the cytoplasm. The protein resides in the cytosol. It is found in the nucleus. The protein localises to the nucleolus. Its subcellular location is the PML body. Potent suppressor of cytokine production that acts as a regulator of innate immune signaling and inflammation. Acts as a key negative regulator of select cytokine and chemokine responses elicited by TRIF-independent Toll-like receptors (TLRs), thereby limiting inflammatory cytokine responses to minor insults. Has ribonuclease activity. The protein is NEDD4-binding protein 1 of Gallus gallus (Chicken).